The primary structure comprises 183 residues: Dual-action ribosomal maturation protein DarP (183 aa).

The protein belongs to the DarP family.

It is found in the cytoplasm. Member of a network of 50S ribosomal subunit biogenesis factors which assembles along the 30S-50S interface, preventing incorrect 23S rRNA structures from forming. Promotes peptidyl transferase center (PTC) maturation. This chain is Dual-action ribosomal maturation protein DarP, found in Shigella boydii serotype 18 (strain CDC 3083-94 / BS512).